A 418-amino-acid polypeptide reads, in one-letter code: Queuine tRNA-ribosyltransferase accessory subunit 2 (418 aa).

Zn(2+) contacts are provided by Cys-325, Cys-327, Cys-330, and His-356.

Belongs to the queuine tRNA-ribosyltransferase family. QTRT2 subfamily. In terms of assembly, heterodimer of a catalytic subunit and an accessory subunit. It depends on Zn(2+) as a cofactor.

The protein resides in the cytoplasm. Its function is as follows. Non-catalytic subunit of the queuine tRNA-ribosyltransferase (TGT) that catalyzes the base-exchange of a guanine (G) residue with queuine (Q) at position 34 (anticodon wobble position) in tRNAs with GU(N) anticodons (tRNA-Asp, -Asn, -His and -Tyr), resulting in the hypermodified nucleoside queuosine (7-(((4,5-cis-dihydroxy-2-cyclopenten-1-yl)amino)methyl)-7-deazaguanosine). The chain is Queuine tRNA-ribosyltransferase accessory subunit 2 from Drosophila sechellia (Fruit fly).